The primary structure comprises 173 residues: Mesencephalic astrocyte-derived neurotrophic factor homolog (173 aa).

The first 22 residues, 1 to 22 (MKTWHMVVVIGFLATLAQTSLA), serve as a signal peptide directing secretion. 4 cysteine pairs are disulfide-bonded: Cys-28–Cys-114, Cys-31–Cys-103, Cys-61–Cys-72, and Cys-148–Cys-151.

Belongs to the ARMET family.

The protein resides in the secreted. Functionally, required during the maturation of the embryonic nervous system for maintenance of neuronal and cuticular connectivity. Essential for maintenance of dopaminergic neurons and dopamine levels. The polypeptide is Mesencephalic astrocyte-derived neurotrophic factor homolog (Drosophila sechellia (Fruit fly)).